Consider the following 237-residue polypeptide: Demethylmenaquinone methyltransferase (237 aa).

S-adenosyl-L-methionine-binding positions include Thr-58, Asp-79, and 106–107; that span reads NA.

Belongs to the class I-like SAM-binding methyltransferase superfamily. MenG/UbiE family.

It carries out the reaction a 2-demethylmenaquinol + S-adenosyl-L-methionine = a menaquinol + S-adenosyl-L-homocysteine + H(+). The protein operates within quinol/quinone metabolism; menaquinone biosynthesis; menaquinol from 1,4-dihydroxy-2-naphthoate: step 2/2. Functionally, methyltransferase required for the conversion of demethylmenaquinol (DMKH2) to menaquinol (MKH2). The chain is Demethylmenaquinone methyltransferase from Bacillus mycoides (strain KBAB4) (Bacillus weihenstephanensis).